A 58-amino-acid polypeptide reads, in one-letter code: UPF0434 protein NT01EI_2448 (58 aa).

This sequence belongs to the UPF0434 family.

The protein is UPF0434 protein NT01EI_2448 of Edwardsiella ictaluri (strain 93-146).